The primary structure comprises 238 residues: Lactate utilization protein A (238 aa).

Belongs to the LutA/YkgE family.

Is involved in L-lactate degradation and allows cells to grow with lactate as the sole carbon source. The chain is Lactate utilization protein A from Geobacillus sp. (strain WCH70).